We begin with the raw amino-acid sequence, 251 residues long: Ditrans,polycis-undecaprenyl-diphosphate synthase ((2E,6E)-farnesyl-diphosphate specific) (251 aa).

The active site involves D29. D29 contacts Mg(2+). Substrate contacts are provided by residues 30 to 33 (GNGK), W34, R42, H46, and 74 to 76 (SSD). N77 serves as the catalytic Proton acceptor. Substrate contacts are provided by residues W78, R80, R197, and 203–205 (RLS). E216 contacts Mg(2+).

It belongs to the UPP synthase family. As to quaternary structure, homodimer. The cofactor is Mg(2+).

The catalysed reaction is 8 isopentenyl diphosphate + (2E,6E)-farnesyl diphosphate = di-trans,octa-cis-undecaprenyl diphosphate + 8 diphosphate. In terms of biological role, catalyzes the sequential condensation of isopentenyl diphosphate (IPP) with (2E,6E)-farnesyl diphosphate (E,E-FPP) to yield (2Z,6Z,10Z,14Z,18Z,22Z,26Z,30Z,34E,38E)-undecaprenyl diphosphate (di-trans,octa-cis-UPP). UPP is the precursor of glycosyl carrier lipid in the biosynthesis of bacterial cell wall polysaccharide components such as peptidoglycan and lipopolysaccharide. This Buchnera aphidicola subsp. Baizongia pistaciae (strain Bp) protein is Ditrans,polycis-undecaprenyl-diphosphate synthase ((2E,6E)-farnesyl-diphosphate specific).